A 266-amino-acid chain; its full sequence is Putative hydro-lyase VF_1377 (266 aa).

It belongs to the D-glutamate cyclase family.

The polypeptide is Putative hydro-lyase VF_1377 (Aliivibrio fischeri (strain ATCC 700601 / ES114) (Vibrio fischeri)).